Here is a 133-residue protein sequence, read N- to C-terminus: Large ribosomal subunit protein uL22 (133 aa).

It belongs to the universal ribosomal protein uL22 family. As to quaternary structure, part of the 50S ribosomal subunit.

Functionally, this protein binds specifically to 23S rRNA; its binding is stimulated by other ribosomal proteins, e.g. L4, L17, and L20. It is important during the early stages of 50S assembly. It makes multiple contacts with different domains of the 23S rRNA in the assembled 50S subunit and ribosome. Its function is as follows. The globular domain of the protein is located near the polypeptide exit tunnel on the outside of the subunit, while an extended beta-hairpin is found that lines the wall of the exit tunnel in the center of the 70S ribosome. The chain is Large ribosomal subunit protein uL22 from Aquifex aeolicus (strain VF5).